Reading from the N-terminus, the 362-residue chain is S-adenosylmethionine decarboxylase proenzyme (362 aa).

Active-site residues include glutamate 11 and glutamate 14. Catalysis depends on serine 71, which acts as the Schiff-base intermediate with substrate; via pyruvic acid. Serine 71 carries the pyruvic acid (Ser); by autocatalysis modification. Cysteine 85 functions as the Proton donor; for catalytic activity in the catalytic mechanism. Residues serine 234 and histidine 247 each act as proton acceptor; for processing activity in the active site.

The protein belongs to the eukaryotic AdoMetDC family. Pyruvate serves as cofactor. Post-translationally, is synthesized initially as an inactive proenzyme. Formation of the active enzyme involves a self-maturation process in which the active site pyruvoyl group is generated from an internal serine residue via an autocatalytic post-translational modification. Two non-identical subunits are generated from the proenzyme in this reaction, and the pyruvate is formed at the N-terminus of the alpha chain, which is derived from the carboxyl end of the proenzyme. The post-translation cleavage follows an unusual pathway, termed non-hydrolytic serinolysis, in which the side chain hydroxyl group of the serine supplies its oxygen atom to form the C-terminus of the beta chain, while the remainder of the serine residue undergoes an oxidative deamination to produce ammonia and the pyruvoyl group blocking the N-terminus of the alpha chain.

The catalysed reaction is S-adenosyl-L-methionine + H(+) = S-adenosyl 3-(methylsulfanyl)propylamine + CO2. Its pathway is amine and polyamine biosynthesis; S-adenosylmethioninamine biosynthesis; S-adenosylmethioninamine from S-adenosyl-L-methionine: step 1/1. The protein is S-adenosylmethionine decarboxylase proenzyme (SAMDC) of Ipomoea nil (Japanese morning glory).